Reading from the N-terminus, the 405-residue chain is Argininosuccinate synthase (405 aa).

ATP contacts are provided by residues 10 to 18 (AFSGGLDTS) and Ala-37. 2 residues coordinate L-citrulline: Tyr-90 and Ser-95. Gly-120 contributes to the ATP binding site. L-aspartate is bound by residues Thr-122, Asn-126, and Asp-127. Asn-126 lines the L-citrulline pocket. 5 residues coordinate L-citrulline: Arg-130, Ser-181, Ser-190, Glu-266, and Tyr-278.

Belongs to the argininosuccinate synthase family. Type 1 subfamily. Homotetramer.

The protein localises to the cytoplasm. It catalyses the reaction L-citrulline + L-aspartate + ATP = 2-(N(omega)-L-arginino)succinate + AMP + diphosphate + H(+). The protein operates within amino-acid biosynthesis; L-arginine biosynthesis; L-arginine from L-ornithine and carbamoyl phosphate: step 2/3. This chain is Argininosuccinate synthase, found in Rhizorhabdus wittichii (strain DSM 6014 / CCUG 31198 / JCM 15750 / NBRC 105917 / EY 4224 / RW1) (Sphingomonas wittichii).